The sequence spans 96 residues: Class I hydrophobin 2 (96 aa).

Positions 1–15 (MFKALIVALAAVAAA) are cleaved as a signal peptide. Disulfide bonds link Cys28–Cys77, Cys34–Cys71, Cys35–Cys55, and Cys78–Cys91.

This sequence belongs to the fungal hydrophobin family.

It is found in the secreted. The protein localises to the cell wall. Its function is as follows. Aerial growth, conidiation, and dispersal of filamentous fungi in the environment rely upon a capability of their secreting small amphipathic proteins called hydrophobins (HPBs) with low sequence identity. Class I can self-assemble into an outermost layer of rodlet bundles on aerial cell surfaces, conferring cellular hydrophobicity that supports fungal growth, development and dispersal; whereas Class II form highly ordered films at water-air interfaces through intermolecular interactions but contribute nothing to the rodlet structure. Hyd2 plays a neglectable role in hyphal growth and asexual development and does not seem involved in cellular hydrophobicity, conidial adhesion, stress tolerance nor insect pathogenicity. In Metarhizium robertsii (strain ARSEF 23 / ATCC MYA-3075) (Metarhizium anisopliae (strain ARSEF 23)), this protein is Class I hydrophobin 2.